Consider the following 406-residue polypeptide: Acetyltransferase sirH (406 aa).

6 helical membrane passes run 9-29 (IFIE…FALG), 32-52 (AHTF…CQSL), 63-83 (LLSN…WILL), 295-315 (VQLF…ALLC), 323-343 (SALF…HVIA), and 358-378 (FIGF…WVGS).

The protein belongs to the wax synthase family.

It is found in the membrane. It functions in the pathway mycotoxin biosynthesis. Its function is as follows. Acetyltransferase; part of the gene cluster that mediates the biosynthesis of sirodesmin PL, an epipolythiodioxopiperazine (ETP) characterized by a disulfide bridged cyclic dipeptide and that acts as a phytotoxin which is involved in the blackleg didease of canola. SirD catalyzes the O-prenylation of L-tyrosine (L-Tyr) in the presence of dimethylallyl diphosphate (DMAPP) to yield 4-O-dimethylallyl-L-Tyr, and therefore represents probably the first pathway-specific enzyme in the biosynthesis of sirodesmin PL. 4-O-dimethylallyl-L-Tyr, then undergoes condensation with L-Ser in a reaction catalyzed by the non-ribosomal peptide synthase sirP to form the diketopiperazine (DKP) backbone. Further bishydroxylation of the DKP performed by the cytochrome P450 monooxygenase sirC leads to the production of the intermediate phomamide. This step is essential to form the reactive thiol group required for toxicity of sirodesmin PL. The next steps of sirodesmin biosynthesis are not well understood yet, but some predictions could be made from intermediate compounds identification. Phomamide is converted into phomalizarine via oxidation, probably by sirT. Further oxidation, methylation (by sirM or sirN) and reduction steps convert phomalizarine to deacetyl sirodesmin. Finally, acetyltransferase sirH probably acetylates deacetyl sirodesmin to produce sirodesmin PL. This Leptosphaeria maculans (Blackleg fungus) protein is Acetyltransferase sirH.